Consider the following 253-residue polypeptide: Ribonuclease HII (253 aa).

Positions 30 to 221 (GPVAGVDEVG…VRRLVVDGEP (192 aa)) constitute an RNase H type-2 domain. 3 residues coordinate a divalent metal cation: Asp36, Glu37, and Asp130.

The protein belongs to the RNase HII family. The cofactor is Mn(2+). Mg(2+) serves as cofactor.

The protein resides in the cytoplasm. It carries out the reaction Endonucleolytic cleavage to 5'-phosphomonoester.. Its function is as follows. Endonuclease that specifically degrades the RNA of RNA-DNA hybrids. This Mycolicibacterium gilvum (strain PYR-GCK) (Mycobacterium gilvum (strain PYR-GCK)) protein is Ribonuclease HII.